The chain runs to 295 residues: Putative xyloglucan endotransglucosylase/hydrolase protein 1 (295 aa).

The N-terminal stretch at 1–24 (MNKMEYLSIFGFVSVLYLIIRVDA) is a signal peptide. Residues 27–225 (YEVNGIDQSK…WSLAPFKANF (199 aa)) form the GH16 domain. The active-site Nucleophile is glutamate 113. The active-site Proton donor is the glutamate 117. Xyloglucan-binding positions include glutamate 117, 129-131 (QTN), and 139-141 (NRE). Asparagine 180 is a glycosylation site (N-linked (GlcNAc...) asparagine). Residues 204–205 (NW) and glycine 209 each bind xyloglucan. Residues asparagine 215 and asparagine 229 are each glycosylated (N-linked (GlcNAc...) asparagine). Cystine bridges form between cysteine 233-cysteine 242 and cysteine 278-cysteine 291. Arginine 283 is a binding site for xyloglucan.

This sequence belongs to the glycosyl hydrolase 16 family. XTH group 1 subfamily. In terms of processing, contains at least one intrachain disulfide bond essential for its enzymatic activity.

It is found in the secreted. The protein resides in the cell wall. The protein localises to the extracellular space. It localises to the apoplast. The catalysed reaction is breaks a beta-(1-&gt;4) bond in the backbone of a xyloglucan and transfers the xyloglucanyl segment on to O-4 of the non-reducing terminal glucose residue of an acceptor, which can be a xyloglucan or an oligosaccharide of xyloglucan.. Functionally, may catalyze xyloglucan endohydrolysis (XEH) and/or endotransglycosylation (XET). Cleaves and religates xyloglucan polymers, an essential constituent of the primary cell wall, and thereby participates in cell wall construction of growing tissues. This is Putative xyloglucan endotransglucosylase/hydrolase protein 1 (XTH1) from Arabidopsis thaliana (Mouse-ear cress).